A 364-amino-acid chain; its full sequence is Chorismate synthase (364 aa).

R48 is a binding site for NADP(+). Residues 131-133 (RSS), 243-244 (NA), G288, 303-307 (KPTSS), and R329 contribute to the FMN site.

The protein belongs to the chorismate synthase family. As to quaternary structure, homotetramer. FMNH2 is required as a cofactor.

It catalyses the reaction 5-O-(1-carboxyvinyl)-3-phosphoshikimate = chorismate + phosphate. It functions in the pathway metabolic intermediate biosynthesis; chorismate biosynthesis; chorismate from D-erythrose 4-phosphate and phosphoenolpyruvate: step 7/7. In terms of biological role, catalyzes the anti-1,4-elimination of the C-3 phosphate and the C-6 proR hydrogen from 5-enolpyruvylshikimate-3-phosphate (EPSP) to yield chorismate, which is the branch point compound that serves as the starting substrate for the three terminal pathways of aromatic amino acid biosynthesis. This reaction introduces a second double bond into the aromatic ring system. This is Chorismate synthase from Brucella abortus (strain S19).